The sequence spans 219 residues: Lipid transferase CIDEA (219 aa).

Residues 33-110 (PARPFRVSNH…ILEKGQKWMP (78 aa)) enclose the CIDE-N domain. The amphipathic helix stretch occupies residues 163–180 (CTGLKGLLRSLLRFLSYS).

It belongs to the CIDE family. In terms of assembly, homodimer. Interacts with CIDEC. Directly interacts with CEBPB. Interacts with isoform CLSTN3beta of CLSTN3; inhibiting the lipid transferase activity of CIDEA. Expressed in omental and subcutaneous adipose tissue (at protein level).

The protein localises to the lipid droplet. The protein resides in the nucleus. It carries out the reaction a triacyl-sn-glycerol(in) = a triacyl-sn-glycerol(out). In terms of biological role, lipid transferase that promotes unilocular lipid droplet formation by mediating lipid droplet fusion. Lipid droplet fusion promotes their enlargement, restricting lipolysis and favoring lipid storage. Localizes on the lipid droplet surface, at focal contact sites between lipid droplets, and mediates atypical lipid droplet fusion by promoting directional net neutral lipid transfer from the smaller to larger lipid droplets. The transfer direction may be driven by the internal pressure difference between the contacting lipid droplet pair and occurs at a lower rate than that promoted by CIDEC. May also act as a CEBPB coactivator in epithelial cells to control the expression of a subset of CEBPB downstream target genes, including ID2, IGF1, PRLR, SOCS1, SOCS3, XDH, but not casein. By interacting with CEBPB, strengthens the association of CEBPB with the XDH promoter, increases histone acetylation and dissociates HDAC1 from the promoter. When overexpressed, induces apoptosis; the physiological significance of its role in apoptosis is unclear. This chain is Lipid transferase CIDEA, found in Homo sapiens (Human).